The chain runs to 355 residues: NADH-quinone oxidoreductase subunit H (355 aa).

The next 8 membrane-spanning stretches (helical) occupy residues 25–45 (VVRI…LILW), 91–111 (WLYL…WAVI), 126–146 (LLYA…AGWA), 170–190 (MGFA…SEIV), 205–225 (FLSW…ISGI), 253–273 (MAFA…SALA), 290–310 (FIPG…VFIW), and 330–350 (VFLP…MSPL).

The protein belongs to the complex I subunit 1 family. NDH-1 is composed of 14 different subunits. Subunits NuoA, H, J, K, L, M, N constitute the membrane sector of the complex.

The protein resides in the cell inner membrane. The catalysed reaction is a quinone + NADH + 5 H(+)(in) = a quinol + NAD(+) + 4 H(+)(out). NDH-1 shuttles electrons from NADH, via FMN and iron-sulfur (Fe-S) centers, to quinones in the respiratory chain. The immediate electron acceptor for the enzyme in this species is believed to be ubiquinone. Couples the redox reaction to proton translocation (for every two electrons transferred, four hydrogen ions are translocated across the cytoplasmic membrane), and thus conserves the redox energy in a proton gradient. This subunit may bind ubiquinone. This Burkholderia cenocepacia (strain HI2424) protein is NADH-quinone oxidoreductase subunit H.